A 273-amino-acid polypeptide reads, in one-letter code: Light-independent protochlorophyllide reductase iron-sulfur ATP-binding protein (273 aa).

Residues 12–17 (GIGKST) and Lys41 each bind ATP. A Mg(2+)-binding site is contributed by Ser16. Residues Cys97 and Cys131 each contribute to the [4Fe-4S] cluster site. An ATP-binding site is contributed by 182 to 183 (NR).

The protein belongs to the NifH/BchL/ChlL family. In terms of assembly, homodimer. Protochlorophyllide reductase is composed of three subunits; BchL, BchN and BchB. Requires [4Fe-4S] cluster as cofactor.

It catalyses the reaction chlorophyllide a + oxidized 2[4Fe-4S]-[ferredoxin] + 2 ADP + 2 phosphate = protochlorophyllide a + reduced 2[4Fe-4S]-[ferredoxin] + 2 ATP + 2 H2O. Its pathway is porphyrin-containing compound metabolism; bacteriochlorophyll biosynthesis (light-independent). In terms of biological role, component of the dark-operative protochlorophyllide reductase (DPOR) that uses Mg-ATP and reduced ferredoxin to reduce ring D of protochlorophyllide (Pchlide) to form chlorophyllide a (Chlide). This reaction is light-independent. The L component serves as a unique electron donor to the NB-component of the complex, and binds Mg-ATP. The protein is Light-independent protochlorophyllide reductase iron-sulfur ATP-binding protein of Chloroflexus aggregans (strain MD-66 / DSM 9485).